Here is a 459-residue protein sequence, read N- to C-terminus: Pentatricopeptide repeat-containing protein At5g18390, mitochondrial (459 aa).

The transit peptide at 1–7 (MLLLRRY) directs the protein to the mitochondrion. PPR repeat units lie at residues 110–144 (TSMEYEELAKSLASHKKYESMWKILKQMKDLSLDI), 145–175 (SGETLCFIIEQYGKNGHVDQAVELFNGVPKT), 181–215 (TVDVYNSLLHALCDVKMFHGAYALIRRMIRKGLKP), 216–250 (DKRTYAILVNGWCSAGKMKEAQEFLDEMSRRGFNP), 251–285 (PARGRDLLIEGLLNAGYLESAKEMVSKMTKGGFVP), 286–320 (DIQTFNILIEAISKSGEVEFCIEMYYTACKLGLCV), 321–355 (DIDTYKTLIPAVSKIGKIDEAFRLLNNCVEDGHKP), 356–390 (FPSLYAPIIKGMCRNGMFDDAFSFFSDMKVKAHPP), and 391–425 (NRPVYTMLITMCGRGGKFVDAANYLVEMTEMGLVP).

The protein belongs to the PPR family. P subfamily.

Its subcellular location is the mitochondrion. This is Pentatricopeptide repeat-containing protein At5g18390, mitochondrial from Arabidopsis thaliana (Mouse-ear cress).